Here is a 279-residue protein sequence, read N- to C-terminus: Tryptophan prenyltransferase ComQ (279 aa).

2 residues coordinate Mg(2+): Asp-67 and Asp-71.

This sequence belongs to the FPP/GGPP synthase family. Mg(2+) serves as cofactor.

It is found in the cell membrane. The catalysed reaction is L-tryptophyl-[protein] + (2E)-geranyl diphosphate = (2S,3R)-3-geranyl-2,3-dihydro-2,N(alpha)-cyclo-L-tryptophyl-[protein] + diphosphate. In terms of biological role, part of a major quorum-sensing system that regulates the development of genetic competence. Involved in the maturation of the competence pheromone ComX. Acts by catalyzing the transfer of a geranyl group on the ComX pheromone. Cannot use farnesyl diphosphate (FPP). The protein is Tryptophan prenyltransferase ComQ of Bacillus spizizenii (Bacillus subtilis subsp. spizizenii).